An 81-amino-acid chain; its full sequence is Sulfur carrier protein TusA (81 aa).

The active-site Cysteine persulfide intermediate is C20.

It belongs to the sulfur carrier protein TusA family.

It localises to the cytoplasm. Its function is as follows. Sulfur carrier protein which probably makes part of a sulfur-relay system. This Colwellia psychrerythraea (strain 34H / ATCC BAA-681) (Vibrio psychroerythus) protein is Sulfur carrier protein TusA.